Here is a 94-residue protein sequence, read N- to C-terminus: MLKPLGDRVVIELVESEEKTASGIVLPDSAKEKPQEGKIVAAGSGRVLESGERVALEVKEGDRIIFSKYAGTEVKYEGTEYLILRESDILAVIG.

It belongs to the GroES chaperonin family. In terms of assembly, heptamer of 7 subunits arranged in a ring. Interacts with the chaperonin GroEL.

The protein localises to the cytoplasm. In terms of biological role, together with the chaperonin GroEL, plays an essential role in assisting protein folding. The GroEL-GroES system forms a nano-cage that allows encapsulation of the non-native substrate proteins and provides a physical environment optimized to promote and accelerate protein folding. GroES binds to the apical surface of the GroEL ring, thereby capping the opening of the GroEL channel. The chain is Co-chaperonin GroES from Bacillus subtilis (strain 168).